Here is a 419-residue protein sequence, read N- to C-terminus: L-cysteine:1D-myo-inositol 2-amino-2-deoxy-alpha-D-glucopyranoside ligase (419 aa).

Positions 1–20 are disordered; the sequence is MRSWSVPEVPALPGRGPRVH. Cysteine 44 is a binding site for Zn(2+). Residues 44–47, threonine 59, and 82–84 contribute to the L-cysteinyl-5'-AMP site; these read CGIT and NVT. A 'HIGH' region motif is present at residues 46–56; sequence ITPYDATHLGH. Residues 191–196 carry the 'ERGGDP' region motif; the sequence is ERGGDP. An L-cysteinyl-5'-AMP-binding site is contributed by tryptophan 232. Cysteine 236 lines the Zn(2+) pocket. An L-cysteinyl-5'-AMP-binding site is contributed by 254–256; the sequence is GSD. Histidine 261 contacts Zn(2+). Residue valine 289 participates in L-cysteinyl-5'-AMP binding. The 'KMSKS' region motif lies at 295–299; the sequence is KMSKS.

It belongs to the class-I aminoacyl-tRNA synthetase family. MshC subfamily. In terms of assembly, monomer. It depends on Zn(2+) as a cofactor.

It carries out the reaction 1D-myo-inositol 2-amino-2-deoxy-alpha-D-glucopyranoside + L-cysteine + ATP = 1D-myo-inositol 2-(L-cysteinylamino)-2-deoxy-alpha-D-glucopyranoside + AMP + diphosphate + H(+). Its function is as follows. Catalyzes the ATP-dependent condensation of GlcN-Ins and L-cysteine to form L-Cys-GlcN-Ins. The chain is L-cysteine:1D-myo-inositol 2-amino-2-deoxy-alpha-D-glucopyranoside ligase from Kineococcus radiotolerans (strain ATCC BAA-149 / DSM 14245 / SRS30216).